The primary structure comprises 356 residues: Phosphate acyltransferase (356 aa).

This sequence belongs to the PlsX family. Homodimer. Probably interacts with PlsY.

It localises to the cytoplasm. The catalysed reaction is a fatty acyl-[ACP] + phosphate = an acyl phosphate + holo-[ACP]. It participates in lipid metabolism; phospholipid metabolism. Its function is as follows. Catalyzes the reversible formation of acyl-phosphate (acyl-PO(4)) from acyl-[acyl-carrier-protein] (acyl-ACP). This enzyme utilizes acyl-ACP as fatty acyl donor, but not acyl-CoA. The chain is Phosphate acyltransferase from Bartonella henselae (strain ATCC 49882 / DSM 28221 / CCUG 30454 / Houston 1) (Rochalimaea henselae).